A 312-amino-acid polypeptide reads, in one-letter code: Putative HTH-type transcriptional regulatory protein Ta1363 (312 aa).

One can recognise an HTH cro/C1-type domain in the interval 133-186 (LREMRMKMSLSIGYLSHYLGVSRRSVSLYENGSSATIDVFLKLQEIIKSDLVDH). Positions 144-163 (IGYLSHYLGVSRRSVSLYEN) form a DNA-binding region, H-T-H motif.

The polypeptide is Putative HTH-type transcriptional regulatory protein Ta1363 (Thermoplasma acidophilum (strain ATCC 25905 / DSM 1728 / JCM 9062 / NBRC 15155 / AMRC-C165)).